The primary structure comprises 232 residues: 6-phosphogluconolactonase (232 aa).

The protein belongs to the glucosamine/galactosamine-6-phosphate isomerase family. 6-phosphogluconolactonase subfamily.

It carries out the reaction 6-phospho-D-glucono-1,5-lactone + H2O = 6-phospho-D-gluconate + H(+). Its pathway is carbohydrate degradation; pentose phosphate pathway; D-ribulose 5-phosphate from D-glucose 6-phosphate (oxidative stage): step 2/3. In terms of biological role, hydrolysis of 6-phosphogluconolactone to 6-phosphogluconate. The polypeptide is 6-phosphogluconolactonase (pgl) (Aggregatibacter actinomycetemcomitans (Actinobacillus actinomycetemcomitans)).